A 483-amino-acid chain; its full sequence is Regulatory protein ViaA (483 aa).

The protein belongs to the ViaA family. In terms of assembly, homodimer. Interacts with RavA.

It localises to the cytoplasm. Its function is as follows. Component of the RavA-ViaA chaperone complex, which may act on the membrane to optimize the function of some of the respiratory chains. ViaA stimulates the ATPase activity of RavA. The protein is Regulatory protein ViaA of Escherichia coli O17:K52:H18 (strain UMN026 / ExPEC).